The chain runs to 186 residues: Negative modulator of initiation of replication (186 aa).

The interaction with DNA stretch occupies residues 93 to 94; the sequence is AV.

It belongs to the SeqA family. As to quaternary structure, homodimer. Polymerizes to form helical filaments.

The protein localises to the cytoplasm. Negative regulator of replication initiation, which contributes to regulation of DNA replication and ensures that replication initiation occurs exactly once per chromosome per cell cycle. Binds to pairs of hemimethylated GATC sequences in the oriC region, thus preventing assembly of replication proteins and re-initiation at newly replicated origins. Repression is relieved when the region becomes fully methylated. The chain is Negative modulator of initiation of replication from Shewanella halifaxensis (strain HAW-EB4).